The chain runs to 519 residues: Putative cysteine ligase BshC (519 aa).

2 coiled-coil regions span residues 51–71 (LNAL…SLKE) and 440–464 (TKLN…HEQA).

This sequence belongs to the BshC family.

Involved in bacillithiol (BSH) biosynthesis. May catalyze the last step of the pathway, the addition of cysteine to glucosamine malate (GlcN-Mal) to generate BSH. The chain is Putative cysteine ligase BshC from Exiguobacterium sibiricum (strain DSM 17290 / CCUG 55495 / CIP 109462 / JCM 13490 / 255-15).